A 277-amino-acid polypeptide reads, in one-letter code: Diaminopimelate epimerase (277 aa).

Residues asparagine 15 and asparagine 74 each contribute to the substrate site. Catalysis depends on cysteine 83, which acts as the Proton donor. Substrate-binding positions include 84–85, asparagine 159, asparagine 194, and 212–213; these read GN and ER. Cysteine 221 acts as the Proton acceptor in catalysis. 222 to 223 contacts substrate; the sequence is GT.

It belongs to the diaminopimelate epimerase family. In terms of assembly, homodimer.

Its subcellular location is the cytoplasm. It carries out the reaction (2S,6S)-2,6-diaminopimelate = meso-2,6-diaminopimelate. The protein operates within amino-acid biosynthesis; L-lysine biosynthesis via DAP pathway; DL-2,6-diaminopimelate from LL-2,6-diaminopimelate: step 1/1. In terms of biological role, catalyzes the stereoinversion of LL-2,6-diaminopimelate (L,L-DAP) to meso-diaminopimelate (meso-DAP), a precursor of L-lysine and an essential component of the bacterial peptidoglycan. Involved in the succinylase branch of the diaminopimelate biosynthesis. The protein is Diaminopimelate epimerase of Corynebacterium glutamicum (strain ATCC 13032 / DSM 20300 / JCM 1318 / BCRC 11384 / CCUG 27702 / LMG 3730 / NBRC 12168 / NCIMB 10025 / NRRL B-2784 / 534).